The following is a 531-amino-acid chain: Histone-arginine methyltransferase CARMER (531 aa).

The region spanning 141 to 450 is the SAM-dependent MTase PRMT-type domain; it reads ASQYFQFYGY…QSYDVTIDLH (310 aa). S-adenosyl-L-methionine is bound by residues glutamine 154, arginine 163, glycine 187, glutamate 209, glutamate 238, and threonine 266. Asymmetric dimethylarginine; by autocatalysis is present on arginine 501.

The protein belongs to the class I-like SAM-binding methyltransferase superfamily. Protein arginine N-methyltransferase family. As to quaternary structure, homodimer. Post-translationally, the dimethylated protein is the major form.

It is found in the cytoplasm. Its subcellular location is the nucleus. The enzyme catalyses L-arginyl-[protein] + 2 S-adenosyl-L-methionine = N(omega),N(omega)-dimethyl-L-arginyl-[protein] + 2 S-adenosyl-L-homocysteine + 2 H(+). In terms of biological role, methylates (mono- and asymmetric dimethylation) the guanidino nitrogens of arginyl residues in proteins. May methylate histone H3 at 'Arg-17' and activate transcription via chromatin remodeling. In Drosophila ananassae (Fruit fly), this protein is Histone-arginine methyltransferase CARMER (Art4).